The chain runs to 231 residues: Ion-translocating oxidoreductase complex subunit E (231 aa).

Transmembrane regions (helical) follow at residues 18–38 (ALVQLLGLCPLLAVTSTATNA), 39–59 (LGLGLATTLVLTLTNLTISTL), 63–83 (TPAEIRIPIYVMIIASVVSAV), 86–106 (LINAYAFGLYQSLGIFIPLIV), 125–145 (ALSALDGFSIGMGATCAMFVL), and 182–202 (PFLLAMLPPGAFIGLGLMLAG).

Belongs to the NqrDE/RnfAE family. As to quaternary structure, the complex is composed of six subunits: RsxA, RsxB, RsxC, RsxD, RsxE and RsxG.

The protein resides in the cell inner membrane. Part of a membrane-bound complex that couples electron transfer with translocation of ions across the membrane. Required to maintain the reduced state of SoxR. The protein is Ion-translocating oxidoreductase complex subunit E of Escherichia coli (strain SE11).